A 144-amino-acid polypeptide reads, in one-letter code: Small ribosomal subunit protein uS9 (144 aa).

T2 is modified (N-acetylthreonine). Positions 124–144 (RRESKKFGGPGARARYQKSYR) are disordered.

Belongs to the universal ribosomal protein uS9 family.

This is Small ribosomal subunit protein uS9 (rps-16) from Caenorhabditis elegans.